Reading from the N-terminus, the 210-residue chain is Orotate phosphoribosyltransferase (210 aa).

5-phospho-alpha-D-ribose 1-diphosphate contacts are provided by residues Arg96, Lys100, His102, and 122–130 (DDLISTGGS). Ser126 is a binding site for orotate.

It belongs to the purine/pyrimidine phosphoribosyltransferase family. PyrE subfamily. As to quaternary structure, homodimer. It depends on Mg(2+) as a cofactor.

It catalyses the reaction orotidine 5'-phosphate + diphosphate = orotate + 5-phospho-alpha-D-ribose 1-diphosphate. It functions in the pathway pyrimidine metabolism; UMP biosynthesis via de novo pathway; UMP from orotate: step 1/2. Catalyzes the transfer of a ribosyl phosphate group from 5-phosphoribose 1-diphosphate to orotate, leading to the formation of orotidine monophosphate (OMP). The chain is Orotate phosphoribosyltransferase from Levilactobacillus brevis (strain ATCC 367 / BCRC 12310 / CIP 105137 / JCM 1170 / LMG 11437 / NCIMB 947 / NCTC 947) (Lactobacillus brevis).